We begin with the raw amino-acid sequence, 344 residues long: Anthranilate phosphoribosyltransferase (344 aa).

5-phospho-alpha-D-ribose 1-diphosphate contacts are provided by residues Gly85, 88–89, Thr93, 95–98, 113–121, and Ser125; these read GD, NIST, and KHGGRSVSS. Gly85 contacts anthranilate. Ser97 is a Mg(2+) binding site. Arg171 serves as a coordination point for anthranilate. Mg(2+) is bound by residues Asp230 and Glu231.

It belongs to the anthranilate phosphoribosyltransferase family. In terms of assembly, homodimer. The cofactor is Mg(2+).

The catalysed reaction is N-(5-phospho-beta-D-ribosyl)anthranilate + diphosphate = 5-phospho-alpha-D-ribose 1-diphosphate + anthranilate. It functions in the pathway amino-acid biosynthesis; L-tryptophan biosynthesis; L-tryptophan from chorismate: step 2/5. Its function is as follows. Catalyzes the transfer of the phosphoribosyl group of 5-phosphorylribose-1-pyrophosphate (PRPP) to anthranilate to yield N-(5'-phosphoribosyl)-anthranilate (PRA). The protein is Anthranilate phosphoribosyltransferase of Acidovorax ebreus (strain TPSY) (Diaphorobacter sp. (strain TPSY)).